A 240-amino-acid polypeptide reads, in one-letter code: NDR1/HIN1-like protein 2 (240 aa).

Residues 57–77 form a helical membrane-spanning segment; it reads NILIAVAVILGVAALILWLIF. N109, N141, N151, and N223 each carry an N-linked (GlcNAc...) asparagine glycan.

Expressed at low levels in roots, rosette leaves, cauline leaves, stems, flowers and siliques.

The protein resides in the cell membrane. In terms of biological role, may play a role in plant immunity. The chain is NDR1/HIN1-like protein 2 from Arabidopsis thaliana (Mouse-ear cress).